Consider the following 442-residue polypeptide: MSSESLTVIVGLGKTGLSCAQFLAAKNRPFAVMDSREEPPEWENFIKTYPRVELIRGQFSEKLLNEAQEIILSPGVSLQEPLIAKQAAQGKSIIGDIELFARNVNKPIIAITGSNGKTTVTTVVGLMMKAAGRNVSVCGNIGEPVLEQITPEPDYYVLELSSFQLETTFSLRSQAATILNISEDHMNRYATLQDYLRAKQRIYTDCFIPIVNADEPEIWRHLPFNKKPLSFGLNNAADFSLAEHNQKTSIAYQGKILMPIQELKLNARHHLQNALAALALGTAAKIPIENMLHVLRDFSGIRHRCQWVRKYKEIDYYNDSKGTNVGATRAAIESLGQAAKGQLILIAGGQGKGADFSPLKDVVKRYVKQVILIGEDAPLLEKTLKEITVIKHADSMNEAVKRSTQAAKAGDIVLLSPACASFDMFTNYEHRGDVFTETVEAL.

Residue Gly-113–Thr-119 coordinates ATP.

The protein belongs to the MurCDEF family.

The protein localises to the cytoplasm. The enzyme catalyses UDP-N-acetyl-alpha-D-muramoyl-L-alanine + D-glutamate + ATP = UDP-N-acetyl-alpha-D-muramoyl-L-alanyl-D-glutamate + ADP + phosphate + H(+). It functions in the pathway cell wall biogenesis; peptidoglycan biosynthesis. Cell wall formation. Catalyzes the addition of glutamate to the nucleotide precursor UDP-N-acetylmuramoyl-L-alanine (UMA). The sequence is that of UDP-N-acetylmuramoylalanine--D-glutamate ligase from Coxiella burnetii (strain Dugway 5J108-111).